Reading from the N-terminus, the 57-residue chain is UPF0391 membrane protein Nham_2738 (57 aa).

Helical transmembrane passes span 4 to 24 (WVVT…GGLA) and 30 to 50 (IAKI…VVGL).

Belongs to the UPF0391 family.

It is found in the cell membrane. This chain is UPF0391 membrane protein Nham_2738, found in Nitrobacter hamburgensis (strain DSM 10229 / NCIMB 13809 / X14).